The primary structure comprises 304 residues: MSLMVIIMACVGFFLLQGAWPQEGVHRKPSFLALPGHLVKSEETVILQCWSDVMFEHFLLHREGKFNNTLHLIGEHHDGVSKANFSIGPMMPVLAGTYRCYGSVPHSPYQLSAPSDPLDMVIIGLYEKPSLSAQPGPTVQAGENVTLSCSSRSSYDMYHLSREGEAHERRLPAVRSINGTFQADFPLGPATHGGTYRCFGSFRDAPYEWSNSSDPLLVSVTGNPSNSWPSPTEPSSKTGNPRHLHVLIGTSVVKIPFTILLFFLLHRWCSDKKNAAVMDQEPAGNRTVNSEDSDEQDHQEVSYA.

Residues 1–21 (MSLMVIIMACVGFFLLQGAWP) form the signal peptide. Over 22–245 (QEGVHRKPSF…SKTGNPRHLH (224 aa)) the chain is Extracellular. Ig-like C2-type domains are found at residues 42-107 (EETV…VPHS) and 142-205 (GENV…FRDA). Cysteine 49 and cysteine 100 are oxidised to a cystine. N-linked (GlcNAc...) asparagine glycans are attached at residues asparagine 67, asparagine 84, asparagine 144, asparagine 178, and asparagine 211. The cysteines at positions 149 and 198 are disulfide-linked. Residues 220–239 (VTGNPSNSWPSPTEPSSKTG) form a disordered region. A helical transmembrane segment spans residues 246–265 (VLIGTSVVKIPFTILLFFLL). Topologically, residues 266–304 (HRWCSDKKNAAVMDQEPAGNRTVNSEDSDEQDHQEVSYA) are cytoplasmic. Positions 280 to 304 (QEPAGNRTVNSEDSDEQDHQEVSYA) are disordered.

This sequence belongs to the immunoglobulin superfamily. Interacts with HLA-F; this interaction is direct.

The protein resides in the cell membrane. Functionally, receptor on natural killer (NK) cells for HLA-C alleles. Does not inhibit the activity of NK cells. In Homo sapiens (Human), this protein is Killer cell immunoglobulin-like receptor 2DS4.